Here is a 66-residue protein sequence, read N- to C-terminus: Brevinin-1CDYd (66 aa).

An N-terminal signal peptide occupies residues 1-22; the sequence is MFTLKKSLLILFFLGTINFSLC. Residues 23–44 constitute a propeptide that is removed on maturation; that stretch reads EEERNAEEERRDDPEERDVEVE. C60 and C66 are joined by a disulfide.

Belongs to the frog skin active peptide (FSAP) family. Brevinin subfamily. As to expression, expressed by the skin glands.

The protein resides in the secreted. In terms of biological role, antimicrobial peptide. This is Brevinin-1CDYd from Rana dybowskii (Dybovsky's frog).